A 447-amino-acid chain; its full sequence is Hydroxymethylglutaryl-CoA synthase (447 aa).

Glu-86 functions as the Proton donor/acceptor in the catalytic mechanism. Cys-118 acts as the Acyl-thioester intermediate in catalysis. Positions 118, 156, 160, 210, 250, 259, 327, and 361 each coordinate (3S)-3-hydroxy-3-methylglutaryl-CoA. His-250 serves as the catalytic Proton donor/acceptor. Position 398 is a phosphothreonine (Thr-398).

The protein belongs to the thiolase-like superfamily. HMG-CoA synthase family.

The enzyme catalyses acetoacetyl-CoA + acetyl-CoA + H2O = (3S)-3-hydroxy-3-methylglutaryl-CoA + CoA + H(+). The protein operates within metabolic intermediate biosynthesis; (R)-mevalonate biosynthesis; (R)-mevalonate from acetyl-CoA: step 2/3. Hydroxymethylglutaryl-CoA synthase; part of the first module of ergosterol biosynthesis pathway that includes the early steps of the pathway, conserved across all eukaryotes, and which results in the formation of mevalonate from acetyl-coenzyme A (acetyl-CoA). Hcs1 condenses acetyl-CoA with acetoacetyl-CoA to form hydroxymethylglutaryl-CoA (HMG-CoA). The first module starts with the action of the cytosolic acetyl-CoA acetyltransferase eg10 that catalyzes the formation of acetoacetyl-CoA. The hydroxymethylglutaryl-CoA synthases erg13 then condenses acetyl-CoA with acetoacetyl-CoA to form HMG-CoA. The rate-limiting step of the early module is the reduction to mevalonate by the 3-hydroxy-3-methylglutaryl-coenzyme A (HMG-CoA) reductases hcs1. The protein is Hydroxymethylglutaryl-CoA synthase of Schizosaccharomyces pombe (strain 972 / ATCC 24843) (Fission yeast).